The sequence spans 2567 residues: Highly reducing polyketide synthase sor1 (2567 aa).

The Ketosynthase family 3 (KS3) domain maps to 14–436; sequence SEPIAIIGMS…GANAHIILED (423 aa). Catalysis depends on for beta-ketoacyl synthase activity residues Cys-187, His-322, and His-359. The segment at 550 to 841 is malonyl-CoA:ACP transacylase (MAT) domain; the sequence is VFTGQGAQWW…VVEVGPHTAL (292 aa). An N-terminal hotdog fold region spans residues 939-1079; that stretch reads HHLLGSLVEG…GLISIEFEAS (141 aa). The tract at residues 939–1249 is dehydratase (DH) domain; it reads HHLLGSLVEG…GFSYQSLGRS (311 aa). The region spanning 939–1252 is the PKS/mFAS DH domain; it reads HHLLGSLVEG…YQSLGRSVSL (314 aa). Catalysis depends on His-971, which acts as the Proton acceptor; for dehydratase activity. Positions 1095-1252 are C-terminal hotdog fold; the sequence is YKRQIPPAQL…YQSLGRSVSL (158 aa). Asp-1161 (proton donor; for dehydratase activity) is an active-site residue. A methyltransferase (CMet) domain region spans residues 1426 to 1534; sequence LEIGASTGGI…RSLLKPGGTL (109 aa). The tract at residues 1852-2163 is enoyl reductase (ER) domain; the sequence is FLPELLVFGD…TEEETGKRVL (312 aa). The ketoreductase (KR) domain stretch occupies residues 2187-2369; sequence ASYLIVGGNG…AVSIDLSLVD (183 aa). One can recognise a Carrier domain in the interval 2481 to 2558; it reads EAISVVGSAV…QLVANVVDRS (78 aa). An O-(pantetheine 4'-phosphoryl)serine modification is found at Ser-2518.

The protein operates within secondary metabolite biosynthesis. Functionally, highly reducing polyketide synthase; part of the SOR gene cluster that mediates the biosynthesis of sorbicillinoids, a diverse group of yellow secondary metabolites that restrict growth of competing pathogenic fungi but not of bacteria. Sorbicillinoids biosynthesis requires the action of two PKSs. The SOR cluster is required for the production of trichodimerol and dihydrotrichotetronin, with sor2 being sufficient for production of trichodimerol, but not dihydrotrichotetronin in the light. Sor1 iteratively combines three acetyl units and the growing chain is modified by the ketoacyl reductase subunit, and optional by the enoyl reductase subunit in the second cycle. The polyketide is then handed over to the PKS sor2, which adds three more acetyl units, and two methyl groups. Sor2 releases an aldehyde, which undergoes spontaneous cyclization resulting in the formation of sorbicillin or 2',3'-dihydrosorbicillin. The monooxygenase sor5 oxidizes sorbicillin and 2',3'-dihydrosorbicillin to 2',3'-dihydrosorbicillinol and sorbicillinol, respectively. The oxidoreductase sor8 further converts sorbicillinol into oxosorbicillinol. Sorbicillinol is the building block for the other sorbicillinoids such as disorbicillinol, bisvertinolon, dihydrobisvertinolone, and dihydrotrichotetronine. The sequence is that of Highly reducing polyketide synthase sor1 from Hypocrea jecorina (strain QM6a) (Trichoderma reesei).